Consider the following 598-residue polypeptide: 2-succinyl-5-enolpyruvyl-6-hydroxy-3-cyclohexene-1-carboxylate synthase (598 aa).

This sequence belongs to the TPP enzyme family. MenD subfamily. In terms of assembly, homodimer. Requires Mg(2+) as cofactor. Mn(2+) serves as cofactor. It depends on thiamine diphosphate as a cofactor.

The enzyme catalyses isochorismate + 2-oxoglutarate + H(+) = 5-enolpyruvoyl-6-hydroxy-2-succinyl-cyclohex-3-ene-1-carboxylate + CO2. Its pathway is quinol/quinone metabolism; 1,4-dihydroxy-2-naphthoate biosynthesis; 1,4-dihydroxy-2-naphthoate from chorismate: step 2/7. It participates in cofactor biosynthesis; phylloquinone biosynthesis. In terms of biological role, catalyzes the thiamine diphosphate-dependent decarboxylation of 2-oxoglutarate and the subsequent addition of the resulting succinic semialdehyde-thiamine pyrophosphate anion to isochorismate to yield 2-succinyl-5-enolpyruvyl-6-hydroxy-3-cyclohexene-1-carboxylate (SEPHCHC). In Prochlorococcus marinus (strain NATL1A), this protein is 2-succinyl-5-enolpyruvyl-6-hydroxy-3-cyclohexene-1-carboxylate synthase.